Here is a 192-residue protein sequence, read N- to C-terminus: Ion-translocating oxidoreductase complex subunit B (192 aa).

The interval 1-26 (MNTIWIAVGALALLGLVFGAILGYAS) is hydrophobic. In terms of domain architecture, 4Fe-4S spans 32–91 (EDDPVVEKIDAILPQSQCGQCGYPGCRPYAEAVGLQGEKINRCAPGGEAVMLKIAELLNV). [4Fe-4S] cluster contacts are provided by Cys49, Cys52, Cys57, Cys74, Cys117, Cys120, Cys123, Cys127, Cys147, Cys150, Cys153, and Cys157. 4Fe-4S ferredoxin-type domains lie at 108–137 (MLAVIDENNCIGCTKCIQACPVDAIVGATR) and 138–167 (AMHTVMSDLCTGCNLCVDPCPTHCIELRPV).

It belongs to the 4Fe4S bacterial-type ferredoxin family. RnfB subfamily. The complex is composed of six subunits: RsxA, RsxB, RsxC, RsxD, RsxE and RsxG. It depends on [4Fe-4S] cluster as a cofactor.

Its subcellular location is the cell inner membrane. Part of a membrane-bound complex that couples electron transfer with translocation of ions across the membrane. Required to maintain the reduced state of SoxR. The polypeptide is Ion-translocating oxidoreductase complex subunit B (Salmonella newport (strain SL254)).